Reading from the N-terminus, the 135-residue chain is MAEGQEEHFSRTQRLKAAVHYVVGSLCQEVADDKEIDFSKQAIAAISEITFRQCESFAKDLEIFARHAKRTTINMDDVKLLARRSRSLYAHISKCSDEIAANSLEQKEKKKKKSVSGGNVSRNSDMDTVVPESKD.

Residues Ser-103–Asp-135 form a disordered region.

Belongs to the TAF9 family. CENP-S/MHF1 subfamily. As to quaternary structure, heterodimer with CENPX, sometimes called MHF; this interaction stabilizes both partners. MHF heterodimers can assemble to form tetrameric structures. MHF also coassemble with CENPT-CENPW heterodimers at centromeres to form the tetrameric CENP-T-W-S-X complex. Forms a discrete complex with FANCM and CENPX, called FANCM-MHF; this interaction, probably mediated by direct binding between CENPS and FANCM, leads to synergistic activation of double-stranded DNA binding and strongly stimulates FANCM-mediated DNA remodeling. Recruited by FANCM to the Fanconi anemia (FA) core complex, which consists of CENPS, CENPX, FANCA, FANCB, FANCC, FANCE, FANCF, FANCG, FANCL, FANCM, FAAP24 and FAAP100. The FA core complex associates with Bloom syndrome (BLM) complex, which consists of at least BLM, DNA topoisomerase 3-alpha (TOP3A), RMI1/BLAP75, RPA1/RPA70 and RPA2/RPA32. The super complex between FA and BLM is called BRAFT. Component of the CENPA-CAD complex, composed of CENPI, CENPK, CENPL, CENPO, CENPP, CENPQ, CENPR and CENPS. The CENPA-CAD complex is probably recruited on centromeres by the CENPA-NAC complex, at least composed of CENPA, CENPC, CENPH, CENPM, CENPN, CENPT and CENPU.

Its subcellular location is the nucleus. The protein resides in the chromosome. It localises to the centromere. It is found in the kinetochore. DNA-binding component of the Fanconi anemia (FA) core complex. Required for the normal activation of the FA pathway, leading to monoubiquitination of the FANCI-FANCD2 complex in response to DNA damage, cellular resistance to DNA cross-linking drugs, and prevention of chromosomal breakage. In complex with CENPX (MHF heterodimer), crucial cofactor for FANCM in both binding and ATP-dependent remodeling of DNA. Stabilizes FANCM. In complex with CENPX and FANCM (but not other FANC proteins), rapidly recruited to blocked forks and promotes gene conversion at blocked replication forks. In complex with CENPT, CENPW and CENPX (CENP-T-W-S-X heterotetramer), involved in the formation of a functional kinetochore outer plate, which is essential for kinetochore-microtubule attachment and faithful mitotic progression. As a component of MHF and CENP-T-W-S-X complexes, binds DNA and bends it to form a nucleosome-like structure. DNA-binding function is fulfilled in the presence of CENPX, with the following preference for DNA substates: Holliday junction &gt; double-stranded &gt; splay arm &gt; single-stranded. Does not bind DNA on its own. This chain is Centromere protein S (cenps), found in Xenopus laevis (African clawed frog).